We begin with the raw amino-acid sequence, 474 residues long: tRNA-2-methylthio-N(6)-dimethylallyladenosine synthase (474 aa).

Residues 3–120 (KKLHIKTWGC…LPEMINSVRG (118 aa)) enclose the MTTase N-terminal domain. 6 residues coordinate [4Fe-4S] cluster: Cys12, Cys49, Cys83, Cys157, Cys161, and Cys164. The Radical SAM core domain occupies 143 to 375 (RAEGPTAFVS…QERINQQAMA (233 aa)). Positions 378 to 441 (RRMLGTVQRI…TNSLRGKVVR (64 aa)) constitute a TRAM domain.

This sequence belongs to the methylthiotransferase family. MiaB subfamily. Monomer. The cofactor is [4Fe-4S] cluster.

It is found in the cytoplasm. The catalysed reaction is N(6)-dimethylallyladenosine(37) in tRNA + (sulfur carrier)-SH + AH2 + 2 S-adenosyl-L-methionine = 2-methylsulfanyl-N(6)-dimethylallyladenosine(37) in tRNA + (sulfur carrier)-H + 5'-deoxyadenosine + L-methionine + A + S-adenosyl-L-homocysteine + 2 H(+). Functionally, catalyzes the methylthiolation of N6-(dimethylallyl)adenosine (i(6)A), leading to the formation of 2-methylthio-N6-(dimethylallyl)adenosine (ms(2)i(6)A) at position 37 in tRNAs that read codons beginning with uridine. This is tRNA-2-methylthio-N(6)-dimethylallyladenosine synthase from Citrobacter koseri (strain ATCC BAA-895 / CDC 4225-83 / SGSC4696).